A 1350-amino-acid polypeptide reads, in one-letter code: Nidogen (1350 aa).

The N-terminal stretch at 1 to 22 (MPTFGSKLLACLLLSSVILVSG) is a signal peptide. In terms of domain architecture, NIDO spans 107–260 (AFYSNVDTSF…GVWLFEVAPI (154 aa)). A glycan (N-linked (GlcNAc...) asparagine) is linked at Asn231. Residues 281 to 321 (LALSCQAHAHQCHEKAECHDKAEGYCCVCGSGFYGNGKSCL) form the EGF-like 1 domain. 3 cysteine pairs are disulfide-bonded: Cys285/Cys298, Cys292/Cys307, and Cys309/Cys320. In terms of domain architecture, Nidogen G2 beta-barrel spans 325–550 (QPIRVTGTLT…GVTPESNACN (226 aa)). N-linked (GlcNAc...) asparagine glycans are attached at residues Asn423 and Asn480. One can recognise an EGF-like 2 domain in the interval 545-583 (ESNACNDGTADCVENSVCVPYEDTYRCDCYHGFAAQLDE). 5 cysteine pairs are disulfide-bonded: Cys549–Cys562, Cys556–Cys571, Cys595–Cys608, Cys602–Cys617, and Cys619–Cys630. In terms of domain architecture, EGF-like 3; calcium-binding spans 591–631 (DIDECATGSHVCDENAVCDNTEGGFNCYCTEGFEGNGYRCL). A glycan (N-linked (GlcNAc...) asparagine) is linked at Asn633. The segment at 645-691 (VEGQAEPTSEPSPNPSPYPDQGQDQEREREDDQYPQPNPYPYPEEQI) is disordered. EGF-like domains follow at residues 788 to 829 (DLIP…YNCD), 832 to 874 (SDDS…FNCQ), 912 to 953 (PAGR…TGCT), 955 to 996 (KPLS…YVCI), and 997 to 1037 (EEQN…SLCQ). Disulfide bonds link Cys792/Cys804, Cys798/Cys815, Cys817/Cys828, Cys836/Cys849, Cys843/Cys860, Cys862/Cys873, Cys916/Cys927, Cys921/Cys938, Cys940/Cys952, Cys959/Cys971, Cys965/Cys982, Cys984/Cys995, Cys1001/Cys1014, Cys1008/Cys1023, and Cys1025/Cys1036. N-linked (GlcNAc...) asparagine glycosylation occurs at Asn801. Asn1032 is a glycosylation site (N-linked (GlcNAc...) asparagine). LDL-receptor class B repeat units lie at residues 1084-1126 (GRVY…DVIS), 1127-1170 (RRLY…DPYR), 1171-1216 (EKLF…LENS), and 1257-1282 (DQFY…QTPI).

In terms of tissue distribution, expressed in the basement membrane around the follicular epithelium of the adult ovary (at protein level).

It is found in the secreted. Its subcellular location is the extracellular space. The protein resides in the extracellular matrix. It localises to the basement membrane. Cell adhesion glycoprotein which is widely distributed in basement membranes. Involved in cell-extracellular matrix (ECM) interactions probably by connecting the laminin and collagen IV networks. Required for permeability and mechanical stability of basement membranes, and ECM dependent neural plasticity. Not involved in assembly of the embryonic basement membrane. This is Nidogen from Drosophila melanogaster (Fruit fly).